We begin with the raw amino-acid sequence, 1277 residues long: MAKGAVTKLKFNSPIISTSDQLISTNELLDRLKALHEELASLDQDNTDLTGLDKYRDALVSRKLLKHKDVGIRAFTACCLSDILRLYAPDAPYTDAQLTDIFKLVLSQFEQLGDQENGYHIQQTYLITKLLEYRSIVLLADLPSSNNLLIELFHIFYDPNKSFPARLFNVIGGILGEVISEFDSVPLEVLRLIFNKFLTYNPNEIPEGLNVTSDCGYEVSLILCDTYSNRMSRHLTKYYSEIIHEATNDDNNSRLLTVVVKLHKLVLRLWETVPELINAVIGFIYHELSSENELFRKEATKLIGQILTSYSDLNFVSTHSDTFKAWISKIADISPDVRVEWTESIPQIIATREDISKELNQALAKTFIDSDPRVRRTSVMIFNKVPVTEIWKNITNKAIYTSLLHLAREKHKEVRELCINTMAKFYSNSLNEIERTYQNKEIWEIIDTIPSTLYNLYYINDLNINEQVDSVIFEYLLPFEPDNDKRVHRLLTVLSHFDKKAFTSFFAFNARQIKISFAISKYIDFSKFLNNQESMSSSQGPIVMNKYNQTLQWLASGLSDSTKAIDALETIKQFNDERIFYLLNACVTNDIPFLTFKNCYNELVSKLQTPGLFKKYNISTGASIMPRDIAKVIQILLFRASPIIYNVSNISVLLNLSNNSDAKQLDLKRRILDDISKVNPTLFKDQIRTLKTIIKDLDDPDAEKNDNLSLEEALKTLYKASKTLKDQVDFDDTFFFTKLYDFAVESKPEITKYATKLIALSPKAEETLKKIKIRILPLDLQKDKYFTSHIIVLMEIFKKFPHVLNDDSTDIISYLIKEVLLSNQVVGDSKKEIDWVEDSLLSDTKYSAIGNKVFTLKLFTNKLRSIAPDVPRDELAESFTEKTMKLFFYLIASGGELISEFNKEFYPTPSNYQTKLRCVAGIQVLKLARISNLNNFIKPSDIIKLINLVEDESLPVRKTFLEQLKDYVANELISIKFLPLVFFTAYEPDVELKTTTKIWINFTFGLKSFKKGTIFERALPRLIHAIAHHPDIVGGLDSEGDAYLNALTTAIDYLLFYFDSIAAQENFSLLYYLSERVKNYQDKLVEDEIDEEEGPQKEEAPKKHRPYGQKMYIIGELSQMILLNLKEKKNWQHSAYPGKLNLPSDLFKPFATVQEAQLSFKTYIPESLTEKIQNNIKAKIGRILHTSQTQRQRLQKRLLAHENNESQKKKKKVHHARSQADDEEGDGDRESDSDDDSYSPSNKNETKKGHENIVMKKLRVRKEVDYKDDEDDDIEMT.

Residues 393-429 form an HEAT repeat; sequence NITNKAIYTSLLHLAREKHKEVRELCINTMAKFYSNS. The tract at residues 1201–1277 is disordered; the sequence is HENNESQKKK…DDEDDDIEMT (77 aa). The segment covering 1208-1217 has biased composition (basic residues); sequence KKKKKVHHAR. A compositionally biased stretch (acidic residues) spans 1221–1237; sequence DDEEGDGDRESDSDDDS. Phosphoserine occurs at positions 1231 and 1233. Residues 1244–1254 show a composition bias toward basic and acidic residues; it reads NETKKGHENIV. The span at 1266–1277 shows a compositional bias: acidic residues; sequence YKDDEDDDIEMT.

It belongs to the PDS5 family. In terms of processing, acetylated by ECO1.

It is found in the nucleus. In terms of biological role, essential for the establishment and maintenance of sister chromatid cohesion at centromere proximal and distal regions during S phase. Also required for chromosomal condensation. This Saccharomyces cerevisiae (strain ATCC 204508 / S288c) (Baker's yeast) protein is Sister chromatid cohesion protein PDS5 (PDS5).